Reading from the N-terminus, the 307-residue chain is Myeloid-associated differentiation marker homolog (307 aa).

MARVEL domains are found at residues T15–G148 and Y153–F304. 8 helical membrane-spanning segments follow: residues P19 to V39, L51 to F71, F85 to P105, I123 to T143, T156 to I176, W190 to V210, Y228 to F248, and M278 to Y298.

Belongs to the MAL family.

The protein resides in the membrane. In Xenopus laevis (African clawed frog), this protein is Myeloid-associated differentiation marker homolog (myadm).